A 665-amino-acid chain; its full sequence is DNA ligase (665 aa).

NAD(+) is bound by residues 35-39 (DAIYD), 88-89 (SL), and E117. Catalysis depends on K119, which acts as the N6-AMP-lysine intermediate. Positions 140, 174, 290, and 314 each coordinate NAD(+). C406, C409, C424, and C429 together coordinate Zn(2+). One can recognise a BRCT domain in the interval 588–665 (KKTERFAQLS…EEAFNELLVS (78 aa)).

It belongs to the NAD-dependent DNA ligase family. LigA subfamily. It depends on Mg(2+) as a cofactor. The cofactor is Mn(2+).

The enzyme catalyses NAD(+) + (deoxyribonucleotide)n-3'-hydroxyl + 5'-phospho-(deoxyribonucleotide)m = (deoxyribonucleotide)n+m + AMP + beta-nicotinamide D-nucleotide.. Its function is as follows. DNA ligase that catalyzes the formation of phosphodiester linkages between 5'-phosphoryl and 3'-hydroxyl groups in double-stranded DNA using NAD as a coenzyme and as the energy source for the reaction. It is essential for DNA replication and repair of damaged DNA. The polypeptide is DNA ligase (Metamycoplasma arthritidis (strain 158L3-1) (Mycoplasma arthritidis)).